Reading from the N-terminus, the 73-residue chain is UPF0346 protein LVIS_0790 (73 aa).

This sequence belongs to the UPF0346 family.

The protein is UPF0346 protein LVIS_0790 of Levilactobacillus brevis (strain ATCC 367 / BCRC 12310 / CIP 105137 / JCM 1170 / LMG 11437 / NCIMB 947 / NCTC 947) (Lactobacillus brevis).